Consider the following 957-residue polypeptide: MSIGKVRIYDLSKELNLDNRDLLAICEQLGIAYKSHSSTISDADADRIREAAKTYQPHSASPRKVSKTSPPVKKAPAPQKTQQIVAVHTQPRSETPEAPKPQLQKPPARPQPPQAPTRPTPPAPVAPKPVEPVAAKPPAPPAKPEPTPPRPVPTLVPPPTRPTKKEEKVAATPPPRKELKEPPKKEKGAIAAAKPSSQDRIEIVQRAVPPAPAKPPEMAPKPALPELQPPPKPVRAPNPPKPVTETVEVLDDKSVSKVIKDRHRHKDFDEEESKRKSSRVVKLREEIIDEEEELELTSRLVGVHQVTVDVSQSLQRPPKPKVPRPARPVTPAAKTEKSSEKKQSRHRDRRPEEPAEAPPPDHITIAGPMSVQELATLVRRPEAEIIKTLFFKGIAATINQTLEVETIELVAKELGITVETAEHKVEATKVTEMLESSDLDHLQRRPPVVTIMGHVDHGKTTLLDAIRNAKVAQGEAGGITQHIGAYHVDVEHNGEKHQVVFLDTPGHEAFTAMRARGARVTDIAVLVVAADDGVQPQTIEAISHAKAAKVPIIVAINKIDKESAQPERIKQELTEYGLVPEEWGGDTIMVPVSALQQQNLDTLLEMILLVAEVEDLYANPNRPAKGTVIEAHLDRARGPVATLLVQNGTLRVGDILVAGACFGRVRAMIDDRGQRVEAATPSFAVEVLGLAEVPAAGDEFEVLSDEKAARALAEERAAAQRQSRLAQAAAARRVSLTSLSSQAREGELKELNLILKADVQGSVEAILTALNQLPQDQVQLRVLLAAPGEITETDVDLAAASSAVIIGFNTTLASGARQAAEQHNVDIREYNIIYKLLDDIQGAMEGMLEPELVEEELGQAEVRAIFPLSKGVVAGCYVLNGKLVRNCKVRVLRQQQVIHTGILSSLKRLKDDVREVAAGYECGVRLDDFQQWQEGDIIYAFQTVTKRRSLGSGSDRN.

2 disordered regions span residues 34-282 (KSHS…RVVK) and 311-367 (SQSL…TIAG). The span at 107–161 (PARPQPPQAPTRPTPPAPVAPKPVEPVAAKPPAPPAKPEPTPPRPVPTLVPPPTR) shows a compositional bias: pro residues. The segment covering 163–188 (TKKEEKVAATPPPRKELKEPPKKEKG) has biased composition (basic and acidic residues). The segment covering 209–242 (PPAPAKPPEMAPKPALPELQPPPKPVRAPNPPKP) has biased composition (pro residues). 2 stretches are compositionally biased toward basic and acidic residues: residues 250–259 (LDDKSVSKVI) and 266–275 (KDFDEEESKR). One can recognise a tr-type G domain in the interval 444 to 617 (RRPPVVTIMG…LLVAEVEDLY (174 aa)). The segment at 453–460 (GHVDHGKT) is G1. 453–460 (GHVDHGKT) serves as a coordination point for GTP. The tract at residues 478–482 (GITQH) is G2. The segment at 503–506 (DTPG) is G3. GTP-binding positions include 503–507 (DTPGH) and 557–560 (NKID). Positions 557–560 (NKID) are G4. Positions 593 to 595 (SAL) are G5.

This sequence belongs to the TRAFAC class translation factor GTPase superfamily. Classic translation factor GTPase family. IF-2 subfamily.

The protein localises to the cytoplasm. Functionally, one of the essential components for the initiation of protein synthesis. Protects formylmethionyl-tRNA from spontaneous hydrolysis and promotes its binding to the 30S ribosomal subunits. Also involved in the hydrolysis of GTP during the formation of the 70S ribosomal complex. This chain is Translation initiation factor IF-2, found in Thermosynechococcus vestitus (strain NIES-2133 / IAM M-273 / BP-1).